The chain runs to 569 residues: Proline--tRNA ligase (569 aa).

Belongs to the class-II aminoacyl-tRNA synthetase family. ProS type 1 subfamily. In terms of assembly, homodimer.

Its subcellular location is the cytoplasm. It catalyses the reaction tRNA(Pro) + L-proline + ATP = L-prolyl-tRNA(Pro) + AMP + diphosphate. Catalyzes the attachment of proline to tRNA(Pro) in a two-step reaction: proline is first activated by ATP to form Pro-AMP and then transferred to the acceptor end of tRNA(Pro). As ProRS can inadvertently accommodate and process non-cognate amino acids such as alanine and cysteine, to avoid such errors it has two additional distinct editing activities against alanine. One activity is designated as 'pretransfer' editing and involves the tRNA(Pro)-independent hydrolysis of activated Ala-AMP. The other activity is designated 'posttransfer' editing and involves deacylation of mischarged Ala-tRNA(Pro). The misacylated Cys-tRNA(Pro) is not edited by ProRS. The polypeptide is Proline--tRNA ligase (Campylobacter hominis (strain ATCC BAA-381 / DSM 21671 / CCUG 45161 / LMG 19568 / NCTC 13146 / CH001A)).